The primary structure comprises 454 residues: Bifunctional protein GlmU (454 aa).

Residues 1 to 228 (MTLPLHVVIL…PQHVEGANDP (228 aa)) are pyrophosphorylase. Residues 10–13 (LAAG), lysine 24, glutamine 76, 81–82 (GT), 103–105 (YGD), glycine 138, glutamate 153, asparagine 168, and asparagine 226 each bind UDP-N-acetyl-alpha-D-glucosamine. A Mg(2+)-binding site is contributed by aspartate 105. Mg(2+) is bound at residue asparagine 226. The interval 229–249 (WQLAQLERAWQLRAARTLCLQ) is linker. Residues 250 to 454 (GVRMADPARV…IEGWKRPTKK (205 aa)) form an N-acetyltransferase region. Positions 332 and 350 each coordinate UDP-N-acetyl-alpha-D-glucosamine. The active-site Proton acceptor is the histidine 362. The UDP-N-acetyl-alpha-D-glucosamine site is built by tyrosine 365 and asparagine 376. Acetyl-CoA is bound by residues alanine 379, 385 to 386 (NY), serine 404, alanine 422, and arginine 439.

The protein in the N-terminal section; belongs to the N-acetylglucosamine-1-phosphate uridyltransferase family. It in the C-terminal section; belongs to the transferase hexapeptide repeat family. As to quaternary structure, homotrimer. Mg(2+) is required as a cofactor.

Its subcellular location is the cytoplasm. The enzyme catalyses alpha-D-glucosamine 1-phosphate + acetyl-CoA = N-acetyl-alpha-D-glucosamine 1-phosphate + CoA + H(+). It catalyses the reaction N-acetyl-alpha-D-glucosamine 1-phosphate + UTP + H(+) = UDP-N-acetyl-alpha-D-glucosamine + diphosphate. The protein operates within nucleotide-sugar biosynthesis; UDP-N-acetyl-alpha-D-glucosamine biosynthesis; N-acetyl-alpha-D-glucosamine 1-phosphate from alpha-D-glucosamine 6-phosphate (route II): step 2/2. It functions in the pathway nucleotide-sugar biosynthesis; UDP-N-acetyl-alpha-D-glucosamine biosynthesis; UDP-N-acetyl-alpha-D-glucosamine from N-acetyl-alpha-D-glucosamine 1-phosphate: step 1/1. It participates in bacterial outer membrane biogenesis; LPS lipid A biosynthesis. Its function is as follows. Catalyzes the last two sequential reactions in the de novo biosynthetic pathway for UDP-N-acetylglucosamine (UDP-GlcNAc). The C-terminal domain catalyzes the transfer of acetyl group from acetyl coenzyme A to glucosamine-1-phosphate (GlcN-1-P) to produce N-acetylglucosamine-1-phosphate (GlcNAc-1-P), which is converted into UDP-GlcNAc by the transfer of uridine 5-monophosphate (from uridine 5-triphosphate), a reaction catalyzed by the N-terminal domain. The protein is Bifunctional protein GlmU of Xanthomonas euvesicatoria pv. vesicatoria (strain 85-10) (Xanthomonas campestris pv. vesicatoria).